The sequence spans 153 residues: Bacteriohemerythrin (153 aa).

Fe cation is bound by residues His21, His57, Glu61, His76, His80, His115, and Asp120.

The protein belongs to the hemerythrin family. As to quaternary structure, monomer.

Oxygen-binding protein. May be involved in a storage mechanism or for delivery to oxygen-requiring enzymes. The oxygen-binding site contains two iron atoms. This Pseudomonas paraeruginosa (strain DSM 24068 / PA7) (Pseudomonas aeruginosa (strain PA7)) protein is Bacteriohemerythrin.